The primary structure comprises 428 residues: Flotillin-1 (428 aa).

Phosphoserine occurs at positions 19, 163, and 385. Phosphothreonine is present on threonine 387.

This sequence belongs to the band 7/mec-2 family. Flotillin subfamily. As to quaternary structure, heterooligomeric complex of flotillin-1 and flotillin-2 and caveolin-1 and caveolin-2. Interacts with ECPAS. High expression in brain, white adipose tissue, heart muscle, skeletal muscle and lung. Low expression in spleen, liver and testis.

The protein localises to the cell membrane. Its subcellular location is the endosome. It is found in the membrane. The protein resides in the caveola. It localises to the melanosome. The protein localises to the membrane raft. May act as a scaffolding protein within caveolar membranes, functionally participating in formation of caveolae or caveolae-like vesicles. In Mus musculus (Mouse), this protein is Flotillin-1 (Flot1).